Consider the following 89-residue polypeptide: Small ribosomal subunit protein bS20 (89 aa).

Residues 1 to 26 (MANIKASKKDALTSEKRRKKNSSRRS) are disordered. The segment covering 16–26 (KRRKKNSSRRS) has biased composition (basic residues).

Belongs to the bacterial ribosomal protein bS20 family.

Its function is as follows. Binds directly to 16S ribosomal RNA. The polypeptide is Small ribosomal subunit protein bS20 (Buchnera aphidicola subsp. Acyrthosiphon pisum (strain 5A)).